The chain runs to 104 residues: Putative arsenate reductase (104 aa).

Cys12 is a catalytic residue.

It belongs to the ArsC family.

The enzyme catalyses [glutaredoxin]-dithiol + arsenate + glutathione + H(+) = glutathionyl-S-S-[glutaredoxin] + arsenite + H2O. Its function is as follows. Reduction of arsenate [As(V)] to arsenite [As(III)]. This protein expands the substrate specificity of ArsAB pump which can extrude arsenite and antimonite to allow for arsenate pumping and resistance. The polypeptide is Putative arsenate reductase (yfjU) (Escherichia coli (strain K12)).